The primary structure comprises 178 residues: Large ribosomal subunit protein uL6 (178 aa).

The protein belongs to the universal ribosomal protein uL6 family. As to quaternary structure, part of the 50S ribosomal subunit.

This protein binds to the 23S rRNA, and is important in its secondary structure. It is located near the subunit interface in the base of the L7/L12 stalk, and near the tRNA binding site of the peptidyltransferase center. The sequence is that of Large ribosomal subunit protein uL6 from Lactococcus lactis subsp. lactis (strain IL1403) (Streptococcus lactis).